Reading from the N-terminus, the 2244-residue chain is Multifunctional protein ura1 (2244 aa).

A GATase (Glutamine amidotransferase) region spans residues 1 to 437 (MSGLLPSLSS…GPRDTEFLFD (437 aa)). Residues 16–44 (QSEALGMPRTHGPKPSENDPKEPTCSPSP) are disordered. L-glutamine contacts are provided by Ser101, Gly309, and Gly311. The region spanning 264–449 (RILVIDVGMK…IDVVKRSADA (186 aa)) is the Glutamine amidotransferase type-1 domain. Cys338 functions as the Nucleophile; for GATase activity in the catalytic mechanism. The L-glutamine site is built by Gln342, Asn380, Gly382, and Tyr383. Active-site for GATase activity residues include His422 and Glu424. The interval 438–477 (VFIDVVKRSADAKSLQPFKLPGGTIEENRSRHPLVDAKRV) is linker. The tract at residues 478–1014 (LILGSGGLSI…VEHDIHFNDK (537 aa)) is CPSase A. The interval 478-1514 (LILGSGGLSI…TNVKCAKLMI (1037 aa)) is CPSase (Carbamoyl phosphate synthase). ATP contacts are provided by Arg594, Arg634, Gly640, Gly641, Arg671, Met673, Glu678, Gly704, Ile705, His706, Gln747, and Glu761. An ATP-grasp 1 domain is found at 598–790 (ARAMDEINEK…LAFTAAKLGL (193 aa)). Residues Gln747, Glu761, and Asn763 each coordinate Mg(2+). Mn(2+)-binding residues include Gln747, Glu761, and Asn763. Positions 1015–1514 (GVMVLGSGVY…TNVKCAKLMI (500 aa)) are CPSase B. Residue Ser1119 is modified to Phosphoserine. In terms of domain architecture, ATP-grasp 2 spans 1133–1324 (SRMLDDIGVD…MISMATDVIM (192 aa)). ATP-binding residues include Arg1169, Lys1208, Ile1210, Glu1215, Gly1240, Val1241, His1242, Ser1243, Gln1283, and Glu1295. Gln1283, Glu1295, and Asn1297 together coordinate Mg(2+). Residues Gln1283, Glu1295, and Asn1297 each coordinate Mn(2+). Residues 1390 to 1552 (FRLPKKNILI…INISAFLPEF (163 aa)) form the MGS-like domain. The interval 1515–1524 (EAICRNLDFS) is linker. The defective DHOase domain stretch occupies residues 1525–1853 (LSTVDFQSSF…FDGHDVFFDG (329 aa)). A linker region spans residues 1854–1935 (ELNFEHTYGR…VQLINSSPFY (82 aa)). Phosphoserine occurs at positions 1881 and 1885. Positions 1936-2244 (RKHIISVHQV…CVMGATEVAN (309 aa)) are ATCase (Aspartate transcarbamylase). Carbamoyl phosphate-binding residues include Arg1988 and Thr1989. Lys2016 is a binding site for L-aspartate. Carbamoyl phosphate-binding residues include Arg2037, His2065, and Gln2068. Positions 2098 and 2160 each coordinate L-aspartate. Residues Leu2199 and Pro2200 each contribute to the carbamoyl phosphate site.

In the N-terminal section; belongs to the CarA family. It in the 2nd section; belongs to the CarB family. The protein in the 3rd section; belongs to the metallo-dependent hydrolases superfamily. DHOase family. CAD subfamily. This sequence in the C-terminal section; belongs to the aspartate/ornithine carbamoyltransferase superfamily. ATCase family. Mg(2+) is required as a cofactor. It depends on Mn(2+) as a cofactor.

The catalysed reaction is hydrogencarbonate + L-glutamine + 2 ATP + H2O = carbamoyl phosphate + L-glutamate + 2 ADP + phosphate + 2 H(+). It carries out the reaction L-glutamine + H2O = L-glutamate + NH4(+). It catalyses the reaction hydrogencarbonate + NH4(+) + 2 ATP = carbamoyl phosphate + 2 ADP + phosphate + 2 H(+). The enzyme catalyses carbamoyl phosphate + L-aspartate = N-carbamoyl-L-aspartate + phosphate + H(+). It participates in pyrimidine metabolism; UMP biosynthesis via de novo pathway; (S)-dihydroorotate from bicarbonate: step 1/3. It functions in the pathway pyrimidine metabolism; UMP biosynthesis via de novo pathway; (S)-dihydroorotate from bicarbonate: step 2/3. Its activity is regulated as follows. Both CPSase and ATCase activities are feedback inhibited by the end product UTP. Functionally, multifunctional protein that encodes the first 2 enzymatic activities of the de novo pyrimidine pathway: carbamoylphosphate synthetase (CPSase; EC 6.3.5.5) and aspartate transcarbamylase (ATCase; EC 2.1.3.2). The CPSase-function is accomplished in 2 steps, by a glutamine-dependent amidotransferase activity (GATase) that binds and cleaves glutamine to produce ammonia, followed by an ammonium-dependent carbamoyl phosphate synthetase, which reacts with the ammonia, hydrogencarbonate and ATP to form carbamoyl phosphate. The endogenously produced carbamoyl phosphate is sequestered and channeled to the ATCase active site. ATCase then catalyzes the formation of carbamoyl-L-aspartate from L-aspartate and carbamoyl phosphate. This Schizosaccharomyces pombe (strain 972 / ATCC 24843) (Fission yeast) protein is Multifunctional protein ura1 (ura1).